Consider the following 381-residue polypeptide: MLTLENVSKTYKGGKKAVNNVNLKIAKGEFICFIGPSGCGKTTTMKMINRLIEPSAGKIFIDGENIMDQDPVELRRKIGYVIQQIGLFPHMTIQQNISLVPKLLKWPEQQRKERARELLKLVDMGPEYVDRYPHELSGGQQQRIGVLRALAAEPPLILMDEPFGALDPITRDSLQEEFKKLQKTLHKTIVFVTHDMDEAIKLADRIVILKAGEIVQVGTPDDILRNPADEFVEEFIGKERLIQSSSPDVERVDQIMNTQPVTITADKTLSEAIQLMRQERVDSLLVVNDERVLQGYVDVEIIDQCRKKANLVSEVLHEDIYTVLGGTLLRDTVRKILKRGVKYVPVVDEDRRLIGIVTRASLVDIVYDSLWGEEKQLAALS.

Positions 2–236 constitute an ABC transporter domain; it reads LTLENVSKTY…PADEFVEEFI (235 aa). 35 to 42 contributes to the ATP binding site; sequence GPSGCGKT. 2 consecutive CBS domains span residues 256 to 314 and 316 to 374; these read MNTQ…LVSE and LHED…WGEE.

It belongs to the ABC transporter superfamily.

Functionally, involved in a high affinity multicomponent binding-protein-dependent transport system for choline. Probably responsible for energy coupling to the transport system. The protein is Choline transport ATP-binding protein OpuBA (opuBA) of Bacillus subtilis (strain 168).